The primary structure comprises 296 residues: Putative methyltransferase HI_1523 (296 aa).

It belongs to the N(4)/N(6)-methyltransferase family.

This chain is Putative methyltransferase HI_1523, found in Haemophilus influenzae (strain ATCC 51907 / DSM 11121 / KW20 / Rd).